We begin with the raw amino-acid sequence, 121 residues long: Neuromedin-B (121 aa).

An N-terminal signal peptide occupies residues 1–24 (MTLRARGARLLGGLLFFTLLAAGA). Position 56 is a methionine amide (methionine 56). A propeptide spanning residues 60-121 (SLEPPNPSLL…RRLLVQTLEK (62 aa)) is cleaved from the precursor.

Belongs to the bombesin/neuromedin-B/ranatensin family. Higher expression in the central nervous system (CNS) than in peripheral tissues. Highest levels are found in the olfactory bulb. Relatively high levels in the CNS (including the cerebral cortex, cerebellum, spinal cord, medulla oblongata, midbrain, hypothalamus, hippocampus, and hypophysis) and in peripheral tissues such as the pancreas, adrenal gland, testis, ovary and cecum. Moderate levels are found in the rectum, heart and pons with low expression levels detected in the bone marrow and duodenum. Other tissues show no or low levels of expression.

It localises to the secreted. The protein resides in the cell projection. Its subcellular location is the neuron projection. Stimulates smooth muscle contraction. Induces sighing by acting directly on the pre-Botzinger complex, a cluster of several thousand neurons in the ventrolateral medulla responsible for inspiration during respiratory activity. Contributes to the induction of sneezing following exposure to chemical irritants or allergens which causes release of NMB by nasal sensory neurons and activation of NMBR-expressing neurons in the sneeze-evoking region of the brainstem. These in turn activate neurons of the caudal ventral respiratory group, giving rise to the sneezing response. Contributes to induction of acute itch, possibly through activation of the NMBR receptor on dorsal root ganglion neurons. Increases expression of NMBR and steroidogenic mediators STAR, CYP11A1 and HSD3B1 in Leydig cells, induces secretion of testosterone by Leydig cells and also promotes Leydig cell proliferation. Plays a role in the innate immune response to influenza A virus infection by enhancing interferon alpha expression and reducing expression of IL6. Plays a role in CSF1-induced proliferation of osteoclast precursors by contributing to positive regulation of the expression of the CSF1 receptor CSF1R. This Sus scrofa (Pig) protein is Neuromedin-B (NMB).